A 316-amino-acid chain; its full sequence is 4-hydroxy-3-methylbut-2-enyl diphosphate reductase (316 aa).

Cys-12 is a [4Fe-4S] cluster binding site. Positions 41 and 74 each coordinate (2E)-4-hydroxy-3-methylbut-2-enyl diphosphate. Residues His-41 and His-74 each coordinate dimethylallyl diphosphate. Residues His-41 and His-74 each coordinate isopentenyl diphosphate. A [4Fe-4S] cluster-binding site is contributed by Cys-96. (2E)-4-hydroxy-3-methylbut-2-enyl diphosphate is bound at residue His-124. His-124 is a binding site for dimethylallyl diphosphate. An isopentenyl diphosphate-binding site is contributed by His-124. The active-site Proton donor is Glu-126. Thr-169 is a (2E)-4-hydroxy-3-methylbut-2-enyl diphosphate binding site. A [4Fe-4S] cluster-binding site is contributed by Cys-199. 4 residues coordinate (2E)-4-hydroxy-3-methylbut-2-enyl diphosphate: Ser-227, Ser-228, Asn-229, and Ser-271. Residues Ser-227, Ser-228, Asn-229, and Ser-271 each coordinate dimethylallyl diphosphate. Residues Ser-227, Ser-228, Asn-229, and Ser-271 each contribute to the isopentenyl diphosphate site.

Belongs to the IspH family. [4Fe-4S] cluster is required as a cofactor.

The enzyme catalyses isopentenyl diphosphate + 2 oxidized [2Fe-2S]-[ferredoxin] + H2O = (2E)-4-hydroxy-3-methylbut-2-enyl diphosphate + 2 reduced [2Fe-2S]-[ferredoxin] + 2 H(+). It catalyses the reaction dimethylallyl diphosphate + 2 oxidized [2Fe-2S]-[ferredoxin] + H2O = (2E)-4-hydroxy-3-methylbut-2-enyl diphosphate + 2 reduced [2Fe-2S]-[ferredoxin] + 2 H(+). The protein operates within isoprenoid biosynthesis; dimethylallyl diphosphate biosynthesis; dimethylallyl diphosphate from (2E)-4-hydroxy-3-methylbutenyl diphosphate: step 1/1. It functions in the pathway isoprenoid biosynthesis; isopentenyl diphosphate biosynthesis via DXP pathway; isopentenyl diphosphate from 1-deoxy-D-xylulose 5-phosphate: step 6/6. Functionally, catalyzes the conversion of 1-hydroxy-2-methyl-2-(E)-butenyl 4-diphosphate (HMBPP) into a mixture of isopentenyl diphosphate (IPP) and dimethylallyl diphosphate (DMAPP). Acts in the terminal step of the DOXP/MEP pathway for isoprenoid precursor biosynthesis. The chain is 4-hydroxy-3-methylbut-2-enyl diphosphate reductase from Xanthomonas oryzae pv. oryzae (strain MAFF 311018).